Consider the following 64-residue polypeptide: Large ribosomal subunit protein bL35 (64 aa).

This sequence belongs to the bacterial ribosomal protein bL35 family.

The polypeptide is Large ribosomal subunit protein bL35 (Vibrio parahaemolyticus serotype O3:K6 (strain RIMD 2210633)).